A 221-amino-acid polypeptide reads, in one-letter code: Transcription factor bHLH148 (221 aa).

2 disordered regions span residues M1 to H45 and L70 to V89. 2 stretches are compositionally biased toward low complexity: residues S26–S41 and S72–A82. One can recognise a bHLH domain in the interval K148–L197.

Homodimer. Interacts with PRE3. Binds to RSA1.

It localises to the nucleus. BHLH transcription factor that binds DNA on specific sequence 5'-CANNTG-3' in target gene promoters. Negatively regulates brassinosteroid signaling. Together with BHLH148/RITF1, regulates the transcription of several genes involved in the detoxification of reactive oxygen species (ROS) generated by salt (NaCl) stress. Confers tolerance to salt and to the oxidative stress-inducing reagents hydrogen peroxide H(2)O(2) and methyl viologen (MV). In Arabidopsis thaliana (Mouse-ear cress), this protein is Transcription factor bHLH148.